Consider the following 142-residue polypeptide: Calmodulin-alpha (142 aa).

The residue at position 2 (Ala-2) is an N-acetylalanine. EF-hand domains lie at 8-43 (EQIAEFKEAFSLFDKDGDGTITTKELGTVMRSLGQN), 44-79 (PTEAELQDMINEVDADGNGTIDFPEFLTMMARKMKD), 81-116 (DSEEEIREAFRVFDKDGNGYISAAELRHVMTNLGEK), and 117-142 (LTDEEVDEMIREADIDGDGQVNYEEF). 15 residues coordinate Ca(2+): Asp-21, Asp-23, Asp-25, Thr-27, Glu-32, Asp-57, Asp-59, Asn-61, Thr-63, Glu-68, Asp-94, Asp-96, Asn-98, Tyr-100, and Glu-105. N6,N6,N6-trimethyllysine is present on Lys-116. Asp-130, Asp-132, Asp-134, Gln-136, and Glu-141 together coordinate Ca(2+).

The protein belongs to the calmodulin family.

Functionally, calmodulin mediates the control of a large number of enzymes, ion channels and other proteins by Ca(2+). Among the enzymes to be stimulated by the calmodulin-Ca(2+) complex are a number of protein kinases and phosphatases. The protein is Calmodulin-alpha of Arbacia punctulata (Punctuate sea urchin).